Reading from the N-terminus, the 517-residue chain is Glycosyltransferase family 92 protein F55C10.4 (517 aa).

The chain crosses the membrane as a helical span at residues 9 to 31 (FLKYFIIFTFFCVTFCFLKLCLG). Residues 156-454 (KPVIFCVSPQ…FKCYNESFYH (299 aa)) enclose the GT92 domain.

This sequence belongs to the glycosyltransferase 92 family.

It localises to the membrane. The chain is Glycosyltransferase family 92 protein F55C10.4 from Caenorhabditis elegans.